We begin with the raw amino-acid sequence, 287 residues long: MAAITAALVKELRERTGEGMMDCKKALEKAGGDIEKAIDDMRASGAIKAAKKAGNVAAEGAIAVKTDGKAAVLLEVNSQTDFLALQDDFKNFVAESIEEAFAQKLTDAAPLIASRESAREALVAKCGENVNIRRLVRVEGDVVGAYLHGNKIGAVVVLKGGDVELAKNIAMHVAASNPEFLDASEISAEAIEREKNVFLQLNADKIAGKPENIVENMINGRITKFKAEASLKEQAFVMNPEVKVGELAKKAGAEIVSFTYFKVGEGIEKPVDNFAEEVAAQVAAAKQ.

Residues 80–83 (TDFL) are involved in Mg(2+) ion dislocation from EF-Tu.

Belongs to the EF-Ts family.

It localises to the cytoplasm. Functionally, associates with the EF-Tu.GDP complex and induces the exchange of GDP to GTP. It remains bound to the aminoacyl-tRNA.EF-Tu.GTP complex up to the GTP hydrolysis stage on the ribosome. The protein is Elongation factor Ts of Pseudomonas entomophila (strain L48).